The following is a 2148-amino-acid chain: Polyketide synthase 1 (2148 aa).

The tract at residues 19 to 261 (FIFGDQSSCN…TPLAVHAPYH (243 aa)) is N-terminal acylcarrier protein transacylase domain (SAT). The 436-residue stretch at 394 to 829 (ESKIAIIGMS…GGNTALLVED (436 aa)) folds into the Ketosynthase family 3 (KS3) domain. Residues Cys566, His701, and His745 each act as for beta-ketoacyl synthase activity in the active site. The interval 929–1233 (AFVFSGQGSQ…PSLMRNKDGW (305 aa)) is malonyl-CoA:ACP transacylase (MAT) domain. Ser1018 functions as the For acyl/malonyl transferase activity in the catalytic mechanism. Positions 1310 to 1624 (TASVHRIVHE…RKVLNTAMPP (315 aa)) are product template (PT) domain. An N-terminal hotdog fold region spans residues 1314–1447 (HRIVHESVEK…SSLHFEQPKV (134 aa)). A PKS/mFAS DH domain is found at 1314-1619 (HRIVHESVEK…FQGIPRKVLN (306 aa)). The active-site Proton acceptor; for dehydratase activity is the His1346. Positions 1474–1619 (LNSRMSSGVI…FQGIPRKVLN (146 aa)) are C-terminal hotdog fold. The active-site Proton donor; for dehydratase activity is the Asp1533. The segment at 1619–1655 (NTAMPPPKSQNEAPVRSGPAKPAVKPPRSASSEHSGH) is disordered. In terms of domain architecture, Carrier 1 spans 1678-1752 (RNPMLPVFKI…DLAAHLGMDT (75 aa)). Ser1712 carries the post-translational modification O-(pantetheine 4'-phosphoryl)serine. Low complexity predominate over residues 1755 to 1790 (ADQSSGQSSSSGGLSPRSDSIGEMTSSATTPPSMSP). The disordered stretch occupies residues 1755 to 1796 (ADQSSGQSSSSGGLSPRSDSIGEMTSSATTPPSMSPRGSVSG). One can recognise a Carrier 2 domain in the interval 1793–1870 (SVSGSQCKDV…SFKHMFQQGH (78 aa)). Residue Ser1830 is modified to O-(pantetheine 4'-phosphoryl)serine. The interval 1882 to 2146 (LKQYRATSTL…ERVAAFIRSI (265 aa)) is thioesterase (TE) domain. Ser1973 functions as the For thioesterase activity in the catalytic mechanism.

Functionally, polyketide synthase; part of the Pks1 gene cluster that mediates the biosynthesis of an anthraquinone derivative pigment that contributes to conidial pigmentation that provides protection from UV radiation, heat and cold stress. The polyketide synthase Pks1 produces 1-acetyl-2,4,6,8-tetrahydroxy-9,10-anthraquinone though condensation of acetyl-CoA with malonyl-CoA. The dehydratase EthD and the laccase Mlac1 further convert the anthraquinone derivative into the final conidial pigment. The chain is Polyketide synthase 1 from Metarhizium brunneum (strain ARSEF 3297).